The chain runs to 292 residues: Protein SETSIP (292 aa).

Residues 1–11 (MAPKRQSPLPL) show a composition bias toward low complexity. Disordered stretches follow at residues 1–43 (MAPK…EQQE) and 158–292 (LNES…GEDD). Positions 35-78 (KKGEKEQQEAIEHIDEVQNEIDRLNEQDSEEILKVEQKYNKLRQ) form a coiled coil. The span at 237 to 292 (DMDDEEGGEDDDDDDDDGDEGEEELEDIDEGDEDEGEEDEDDDEGEEGEEDEGEDD) shows a compositional bias: acidic residues.

The protein belongs to the nucleosome assembly protein (NAP) family. In terms of tissue distribution, expressed in endothelial cell (EC) and protein-induced pluripotent stem (PiPS) endothelial cell (EC) (at protein level).

It localises to the cytoplasm. It is found in the nucleus. Functionally, plays a role as a transcriptional activator involved in the early stage of somatic cell reprogramming. Promotes the differentiation of protein-induced pluripotent stem (PiPS) cells into endothelial cells and the formation of vascular-like tubes (in vitro). Involved in the transcription induction of vascular endothelial-cadherin (VE-cadherin) expression. Associates to the VE-cadherin gene promoter. The chain is Protein SETSIP (SETSIP) from Homo sapiens (Human).